A 1633-amino-acid chain; its full sequence is Laminin-like protein lam-2 (1633 aa).

An N-terminal signal peptide occupies residues 1-19 (MTSILWLFSLAVLWHMGQP). In terms of domain architecture, Laminin N-terminal spans 47–286 (QPQRCVPDFV…AISDFAVGGR (240 aa)). N-linked (GlcNAc...) asparagine glycans are attached at residues Asn-116 and Asn-136. Cystine bridges form between Cys-287-Cys-296, Cys-289-Cys-310, Cys-312-Cys-321, Cys-324-Cys-344, Cys-347-Cys-356, Cys-349-Cys-372, Cys-375-Cys-384, Cys-387-Cys-400, Cys-403-Cys-415, Cys-405-Cys-421, Cys-423-Cys-432, Cys-435-Cys-447, Cys-450-Cys-464, Cys-452-Cys-471, Cys-473-Cys-482, and Cys-485-Cys-500. Laminin EGF-like domains are found at residues 287–346 (CKCN…ECIA), 347–402 (CNCS…YCVA), 403–449 (CGCN…GCKN), and 450–502 (CGCE…GCTP). Asn-348 carries an N-linked (GlcNAc...) asparagine glycan. One can recognise a Laminin EGF-like 5; first part domain in the interval 503–512 (CFCFGHSSIC). Residues Asn-522, Asn-658, and Asn-740 are each glycosylated (N-linked (GlcNAc...) asparagine). The Laminin IV type A domain occupies 529 to 701 (QDKQKWAGQN…NPKQATWIEH (173 aa)). Residues 702 to 747 (CECLPGFVGQFCESCESGFRRETKFGGPFNHCIKCDCHNHSNSCEA) enclose the Laminin EGF-like 5; second part domain. 23 disulfide bridges follow: Cys-736/Cys-745, Cys-738/Cys-752, Cys-754/Cys-763, Cys-766/Cys-782, Cys-785/Cys-803, Cys-806/Cys-815, Cys-818/Cys-832, Cys-835/Cys-849, Cys-837/Cys-856, Cys-859/Cys-868, Cys-871/Cys-887, Cys-890/Cys-909, Cys-892/Cys-916, Cys-918/Cys-927, Cys-930/Cys-943, Cys-946/Cys-958, Cys-948/Cys-965, Cys-967/Cys-976, Cys-979/Cys-991, Cys-994/Cys-1006, Cys-996/Cys-1013, Cys-1015/Cys-1024, and Cys-1027/Cys-1038. One can recognise a Laminin EGF-like 6; truncated domain in the interval 752 to 784 (CICEHNTAGDTCERCARGYYGDALQGTEEDCQK). Laminin EGF-like domains are found at residues 785–834 (CPCP…ECVE), 835–889 (CACS…NCQS), 890–945 (CGCF…GCQE), 946–993 (CNCD…GCQP), and 994–1040 (CDCE…GCLP). Asn-936 carries an N-linked (GlcNAc...) asparagine glycan. N-linked (GlcNAc...) asparagine glycans are attached at residues Asn-1077, Asn-1183, Asn-1226, Asn-1259, Asn-1336, Asn-1452, and Asn-1528.

Functionally, during the formation of neuromuscular junctions at the larval stage, negatively regulates membrane protrusion from body wall muscles, probably downstream of the integrin complex formed by pat-2 and pat-3. This Caenorhabditis elegans protein is Laminin-like protein lam-2 (lam-2).